A 279-amino-acid chain; its full sequence is Four and a half LIM domains protein 2 (279 aa).

The segment at 7–31 (CHHCNESLYGKKYILKEENPHCVAC) adopts a C4-type zinc-finger fold. LIM zinc-binding domains follow at residues 40–92 (CEEC…CTDC), 101–153 (CQEC…CVPC), and 162–212 (CVQC…CLTC). Residue Lys78 forms a Glycyl lysine isopeptide (Lys-Gly) (interchain with G-Cter in SUMO2) linkage. Residues Lys167 and Lys220 each participate in a glycyl lysine isopeptide (Lys-Gly) (interchain with G-Cter in SUMO2) cross-link. In terms of domain architecture, LIM zinc-binding 4 spans 221-275 (CAGCTNPISGLGGTKYISFEERQWHNDCFNCKKCSLSLVGRGFLTERDDILCPDC). Ser238 is modified (phosphoserine).

In terms of assembly, interacts with ZNF638 and TTN/titin. Interacts with E4F1. Interacts with GRB7. Interacts with SIRT1 and FOXO1. Interacts with CEFIP. Interacts with calcineurin. Interacts with FOXK1. Highly expressed in heart but also detectable in brain and skeletal muscle.

It localises to the cytoplasm. Its subcellular location is the nucleus. It is found in the myofibril. The protein resides in the sarcomere. The protein localises to the z line. May function as a molecular transmitter linking various signaling pathways to transcriptional regulation. Negatively regulates the transcriptional repressor E4F1 and may function in cell growth. Inhibits the transcriptional activity of FOXO1 and its apoptotic function by enhancing the interaction of FOXO1 with SIRT1 and FOXO1 deacetylation. Negatively regulates the calcineurin/NFAT signaling pathway in cardiomyocytes. This Mus musculus (Mouse) protein is Four and a half LIM domains protein 2 (Fhl2).